A 311-amino-acid chain; its full sequence is MTKLIFMGTPDFSATVLKGLLTDDRYEILAVVTQPDRAVGRKKVIQETPVKQAAKEAGLSIYQPEKLSGSPEMEELMKLGADGIVTAAFGQFLPSKLLDSMDFAVNVHASLLPRHRGGAPIHYALIQGDEEAGVTIMEMVKEMDAGDMISRRSIPITDEDNVGTLFEKLALVGRDLLLDTLPAYIAGDIKPEPQDTSQVTFSPNIKPEEEKLDWNKTNRQLFNQIRGMNPWPVAHTFLKGDRFKIYEALPVEGQGNPGEILSICKKELIVATAEGALSLKQVQPAGKPKMDIASFLNGVGRTLTVGERFGD.

A (6S)-5,6,7,8-tetrahydrofolate-binding site is contributed by 110–113 (SLLP).

It belongs to the Fmt family.

It catalyses the reaction L-methionyl-tRNA(fMet) + (6R)-10-formyltetrahydrofolate = N-formyl-L-methionyl-tRNA(fMet) + (6S)-5,6,7,8-tetrahydrofolate + H(+). Its function is as follows. Attaches a formyl group to the free amino group of methionyl-tRNA(fMet). The formyl group appears to play a dual role in the initiator identity of N-formylmethionyl-tRNA by promoting its recognition by IF2 and preventing the misappropriation of this tRNA by the elongation apparatus. In Streptococcus pneumoniae serotype 19F (strain G54), this protein is Methionyl-tRNA formyltransferase.